A 98-amino-acid chain; its full sequence is MANTKFRPLHDRVVVRRVESENKTAGGIIIPDTAQEKPQEGEVIAVGNGVLNDNGQRVSLEVKEGDRILFGKWSGTEVKINGEELLIMKESDIMGILA.

Belongs to the GroES chaperonin family. As to quaternary structure, heptamer of 7 subunits arranged in a ring. Interacts with the chaperonin GroEL.

Its subcellular location is the cytoplasm. In terms of biological role, together with the chaperonin GroEL, plays an essential role in assisting protein folding. The GroEL-GroES system forms a nano-cage that allows encapsulation of the non-native substrate proteins and provides a physical environment optimized to promote and accelerate protein folding. GroES binds to the apical surface of the GroEL ring, thereby capping the opening of the GroEL channel. The sequence is that of Co-chaperonin GroES from Bartonella bacilliformis (strain ATCC 35685 / KC583 / Herrer 020/F12,63).